A 527-amino-acid chain; its full sequence is Arginine--tRNA ligase (527 aa).

The short motif at 108 to 118 is the 'HIGH' region element; sequence ANPTGPLHIGH.

The protein belongs to the class-I aminoacyl-tRNA synthetase family. Monomer.

The protein localises to the cytoplasm. It carries out the reaction tRNA(Arg) + L-arginine + ATP = L-arginyl-tRNA(Arg) + AMP + diphosphate. The chain is Arginine--tRNA ligase from Sulfurimonas denitrificans (strain ATCC 33889 / DSM 1251) (Thiomicrospira denitrificans (strain ATCC 33889 / DSM 1251)).